The sequence spans 361 residues: Dihydroorotate dehydrogenase (quinone) (361 aa).

FMN-binding positions include 67–71 (AGLDK) and T91. K71 lines the substrate pocket. 116–120 (NRMGF) lines the substrate pocket. Positions 145 and 178 each coordinate FMN. N178 lines the substrate pocket. The active-site Nucleophile is S181. N183 is a binding site for substrate. K223 and G251 together coordinate FMN. 252–253 (NT) lines the substrate pocket. Residues G273, G302, and 323–324 (YT) contribute to the FMN site.

This sequence belongs to the dihydroorotate dehydrogenase family. Type 2 subfamily. Monomer. The cofactor is FMN.

It is found in the cell membrane. It carries out the reaction (S)-dihydroorotate + a quinone = orotate + a quinol. It participates in pyrimidine metabolism; UMP biosynthesis via de novo pathway; orotate from (S)-dihydroorotate (quinone route): step 1/1. Its function is as follows. Catalyzes the conversion of dihydroorotate to orotate with quinone as electron acceptor. The polypeptide is Dihydroorotate dehydrogenase (quinone) (Deinococcus geothermalis (strain DSM 11300 / CIP 105573 / AG-3a)).